A 217-amino-acid chain; its full sequence is Adapter protein MecA (217 aa).

Belongs to the MecA family. In terms of assembly, homodimer.

Functionally, enables the recognition and targeting of unfolded and aggregated proteins to the ClpC protease or to other proteins involved in proteolysis. The protein is Adapter protein MecA of Listeria welshimeri serovar 6b (strain ATCC 35897 / DSM 20650 / CCUG 15529 / CIP 8149 / NCTC 11857 / SLCC 5334 / V8).